The following is a 109-amino-acid chain: Ferredoxin (109 aa).

2 4Fe-4S ferredoxin-type domains span residues 2-30 (TYVVNDECVKCKYTDCVDVCPVDCFYEGE) and 31-60 (FMLVINPDECIDCGVCVPDCPIDAIKPESP). [3Fe-4S] cluster contacts are provided by cysteine 9 and cysteine 17. The [4Fe-4S] cluster site is built by cysteine 21, cysteine 40, cysteine 43, and cysteine 46. Residue cysteine 50 coordinates [3Fe-4S] cluster.

[4Fe-4S] cluster is required as a cofactor. It depends on [3Fe-4S] cluster as a cofactor.

Functionally, ferredoxins are iron-sulfur proteins that transfer electrons in a wide variety of metabolic reactions. The sequence is that of Ferredoxin (fdxA) from Rickettsia felis (strain ATCC VR-1525 / URRWXCal2) (Rickettsia azadi).